The sequence spans 159 residues: 6,7-dimethyl-8-ribityllumazine synthase (159 aa).

5-amino-6-(D-ribitylamino)uracil-binding positions include Trp-28, 59-61, and 81-83; these read ALE and CVI. 86 to 87 lines the (2S)-2-hydroxy-3-oxobutyl phosphate pocket; sequence GT. The active-site Proton donor is the His-89. Asn-114 contacts 5-amino-6-(D-ribitylamino)uracil. Residue Arg-128 coordinates (2S)-2-hydroxy-3-oxobutyl phosphate.

The protein belongs to the DMRL synthase family.

It catalyses the reaction (2S)-2-hydroxy-3-oxobutyl phosphate + 5-amino-6-(D-ribitylamino)uracil = 6,7-dimethyl-8-(1-D-ribityl)lumazine + phosphate + 2 H2O + H(+). The protein operates within cofactor biosynthesis; riboflavin biosynthesis; riboflavin from 2-hydroxy-3-oxobutyl phosphate and 5-amino-6-(D-ribitylamino)uracil: step 1/2. In terms of biological role, catalyzes the formation of 6,7-dimethyl-8-ribityllumazine by condensation of 5-amino-6-(D-ribitylamino)uracil with 3,4-dihydroxy-2-butanone 4-phosphate. This is the penultimate step in the biosynthesis of riboflavin. The chain is 6,7-dimethyl-8-ribityllumazine synthase from Corynebacterium kroppenstedtii (strain DSM 44385 / JCM 11950 / CIP 105744 / CCUG 35717).